Consider the following 194-residue polypeptide: RNA polymerase II subunit A C-terminal domain phosphatase SSU72 like protein 4 (194 aa).

This sequence belongs to the SSU72 phosphatase family.

The protein resides in the nucleus. It carries out the reaction O-phospho-L-seryl-[protein] + H2O = L-seryl-[protein] + phosphate. The enzyme catalyses O-phospho-L-threonyl-[protein] + H2O = L-threonyl-[protein] + phosphate. Functionally, protein phosphatase that catalyzes the dephosphorylation of the C-terminal domain of RNA polymerase II. Plays a role in RNA processing and termination. This is RNA polymerase II subunit A C-terminal domain phosphatase SSU72 like protein 4 from Homo sapiens (Human).